The sequence spans 122 residues: MLSLLHTSTLAVLGALCVYGAGHLEQPQISSTKTLSKTARLECVVSGITISATSVYWYRERPGEVIQFLVSISYDGTVRKESGIPSGKFEVDRIPETSTSTLTIHNVEKQDIATYYCALWEV.

A signal peptide spans 1–20; sequence MLSLLHTSTLAVLGALCVYG. In terms of domain architecture, Ig-like spans 27–122; the sequence is PQISSTKTLS…ATYYCALWEV (96 aa). Cys43 and Cys117 are oxidised to a cystine.

In terms of assembly, gamma-delta TR is a heterodimer composed of a gamma and delta chain; disulfide-linked. The gamma-delta TR is associated with the transmembrane signaling CD3 coreceptor proteins following the stoichiometry: a single gamma-delta TR heterodimer associates with one CD3D-CD3E heterodimer, one CD3G-CD3E heterodimer and one CD247 homodimer forming a stable octameric structure. Upon activation, gamma-delta TR complex associates with FCER1G to initiate intracellular signaling.

The protein localises to the cell membrane. In terms of biological role, v region of the variable domain of T cell receptor (TR) gamma chain that participates in the antigen recognition. Gamma-delta TRs recognize a variety of self and foreign non-peptide antigens frequently expressed at the epithelial boundaries between the host and external environment, including endogenous lipids presented by MH-like protein CD1D and phosphoantigens presented by butyrophilin-like molecule BTN3A1. Upon antigen recognition induces rapid, innate-like immune responses involved in pathogen clearance and tissue repair. Binding of gamma-delta TR complex to antigen triggers phosphorylation of immunoreceptor tyrosine-based activation motifs (ITAMs) in the CD3 chains by the LCK and FYN kinases, allowing the recruitment, phosphorylation, and activation of ZAP70 that facilitates phosphorylation of the scaffolding proteins LCP2 and LAT. This lead to the formation of a supramolecular signalosome that recruits the phospholipase PLCG1, resulting in calcium mobilization and ERK activation, ultimately leading to T cell expansion and differentiation into effector cells. Gamma-delta TRs are produced through somatic rearrangement of a limited repertoire of variable (V), diversity (D), and joining (J) genes. The potential diversity of gamma-delta TRs is conferred by the unique ability to rearrange (D) genes in tandem and to utilize all three reading frames. The combinatorial diversity is considerably increased by the sequence exonuclease trimming and random nucleotide (N) region additions which occur during the V-(D)-J rearrangements. This chain is T cell receptor gamma variable 9, found in Homo sapiens (Human).